We begin with the raw amino-acid sequence, 412 residues long: Putative competence-damage inducible protein (412 aa).

This sequence belongs to the CinA family.

In Clostridium perfringens (strain ATCC 13124 / DSM 756 / JCM 1290 / NCIMB 6125 / NCTC 8237 / Type A), this protein is Putative competence-damage inducible protein.